We begin with the raw amino-acid sequence, 117 residues long: Hydrogenase maturation factor HypA (117 aa).

His2 lines the Ni(2+) pocket. Zn(2+) contacts are provided by Cys73, Cys76, Cys89, and Cys92.

The protein belongs to the HypA/HybF family.

In terms of biological role, involved in the maturation of [NiFe] hydrogenases. Required for nickel insertion into the metal center of the hydrogenase. In Chlorobium luteolum (strain DSM 273 / BCRC 81028 / 2530) (Pelodictyon luteolum), this protein is Hydrogenase maturation factor HypA.